The sequence spans 424 residues: Probable serine/threonine-protein kinase PBL15 (424 aa).

Residues 99–380 enclose the Protein kinase domain; the sequence is FSGNYLLGEG…AVVEALESLI (282 aa). ATP is bound by residues 105-113 and Lys-134; that span reads LGEGGFGKV. Tyr-179 is modified (phosphotyrosine). Asp-229 serves as the catalytic Proton acceptor. The residue at position 233 (Ser-233) is a Phosphoserine. 2 positions are modified to phosphothreonine: Thr-264 and Thr-269. At Tyr-277 the chain carries Phosphotyrosine. A disordered region spans residues 390 to 424; sequence GHWPLSPKSQGGKVSPKVRGDHRSGRKSAPGSLRS.

It belongs to the protein kinase superfamily. Ser/Thr protein kinase family. As to quaternary structure, interacts with the Xanthomonas campestris effector XopAC/AvrAC.

Its subcellular location is the cell membrane. It carries out the reaction L-seryl-[protein] + ATP = O-phospho-L-seryl-[protein] + ADP + H(+). The enzyme catalyses L-threonyl-[protein] + ATP = O-phospho-L-threonyl-[protein] + ADP + H(+). Its function is as follows. May be involved in plant defense signaling. This is Probable serine/threonine-protein kinase PBL15 from Arabidopsis thaliana (Mouse-ear cress).